Consider the following 316-residue polypeptide: Olfactory receptor 10H3 (316 aa).

At 1 to 25 (MPGQNYRTISEFILSGFSAFPQQLL) the chain is on the extracellular side. Residues 26 to 46 (PVLFLLYLLMFLFTLLGNLLI) traverse the membrane as a helical segment. At 47–54 (MATVWIER) the chain is on the cytoplasmic side. The helical transmembrane segment at 55–75 (RLHTPMYLFLCALSISEILFT) threads the bilayer. The Extracellular portion of the chain corresponds to 76–99 (VAITPRMLADLLFTHRSITFVACA). Cysteine 98 and cysteine 190 are oxidised to a cystine. Residues 100 to 120 (IQMFFSFMFGFTHSFLLMVMG) form a helical membrane-spanning segment. Residues 121–139 (YDHYVTICHPLHYNMLMSP) are Cytoplasmic-facing. The helical transmembrane segment at 140–160 (RGCAHLVAWTWAGGSVMGMMV) threads the bilayer. Topologically, residues 161–197 (TMMVFHLTFCGSNVIHHFLCHVLSLLKLACGSKTSSV) are extracellular. The helical transmembrane segment at 198-218 (IMGVMLVCVTALIGCLFLIIL) threads the bilayer. The Cytoplasmic portion of the chain corresponds to 219–238 (SFVFIVAAILRIPSAEGRHK). The helical transmembrane segment at 239-259 (TFSTCVSHLTVVVMHYSFASL) threads the bilayer. Topologically, residues 260-272 (IYLKPKGLHSMYS) are extracellular. A helical membrane pass occupies residues 273–293 (DALMATTYTVFTPFLSPIIFS). Residues 294-316 (LRNKELKNAINKNFCRRFCPLSS) lie on the Cytoplasmic side of the membrane.

This sequence belongs to the G-protein coupled receptor 1 family.

The protein localises to the cell membrane. Functionally, odorant receptor. This Homo sapiens (Human) protein is Olfactory receptor 10H3 (OR10H3).